The primary structure comprises 511 residues: 2-isopropylmalate synthase (511 aa).

Residues 5-267 form the Pyruvate carboxyltransferase domain; sequence LIVFDTTLRD…DTRIDATQIV (263 aa). Mn(2+) is bound by residues Asp14, His202, His204, and Asn238. Residues 393 to 511 form a regulatory domain region; that stretch reads RLVASRFHSE…SKLERLNPQL (119 aa).

The protein belongs to the alpha-IPM synthase/homocitrate synthase family. LeuA type 1 subfamily. As to quaternary structure, homodimer. The cofactor is Mn(2+).

The protein localises to the cytoplasm. The enzyme catalyses 3-methyl-2-oxobutanoate + acetyl-CoA + H2O = (2S)-2-isopropylmalate + CoA + H(+). Its pathway is amino-acid biosynthesis; L-leucine biosynthesis; L-leucine from 3-methyl-2-oxobutanoate: step 1/4. Functionally, catalyzes the condensation of the acetyl group of acetyl-CoA with 3-methyl-2-oxobutanoate (2-ketoisovalerate) to form 3-carboxy-3-hydroxy-4-methylpentanoate (2-isopropylmalate). This is 2-isopropylmalate synthase from Aromatoleum aromaticum (strain DSM 19018 / LMG 30748 / EbN1) (Azoarcus sp. (strain EbN1)).